A 583-amino-acid polypeptide reads, in one-letter code: Phosphoglucomutase, cytoplasmic (583 aa).

Residues 1–20 (MANFKVSRVETTPFEGQKPG) are disordered. Residues R25 and S124 each coordinate alpha-D-glucose 1,6-bisphosphate. The active-site Phosphoserine intermediate is the S124. The Mg(2+) site is built by S124, D300, D302, and D304. Residue S124 is modified to Phosphoserine. Alpha-D-glucose 1,6-bisphosphate-binding residues include D304, R305, T368, E387, S389, and K400.

This sequence belongs to the phosphohexose mutase family. Monomer. Requires Mg(2+) as cofactor.

Its subcellular location is the cytoplasm. It catalyses the reaction alpha-D-glucose 1-phosphate = alpha-D-glucose 6-phosphate. The enzyme catalyses O-phospho-L-seryl-[protein] + alpha-D-glucose 1-phosphate = alpha-D-glucose 1,6-bisphosphate + L-seryl-[protein]. The catalysed reaction is alpha-D-glucose 1,6-bisphosphate + L-seryl-[protein] = O-phospho-L-seryl-[protein] + alpha-D-glucose 6-phosphate. Functionally, catalyzes the reversible isomerization of alpha-D-glucose 1-phosphate to alpha-D-glucose 6-phosphate. The mechanism proceeds via the intermediate compound alpha-D-glucose 1,6-bisphosphate. This enzyme participates in both the breakdown and synthesis of glucose. This Solanum tuberosum (Potato) protein is Phosphoglucomutase, cytoplasmic (PGM1).